Reading from the N-terminus, the 407-residue chain is Imidazolonepropionase (407 aa).

Residues H74 and H76 each contribute to the Fe(3+) site. 2 residues coordinate Zn(2+): H74 and H76. Residues R83, Y146, and H179 each coordinate 4-imidazolone-5-propanoate. Y146 lines the N-formimidoyl-L-glutamate pocket. H244 serves as a coordination point for Fe(3+). H244 provides a ligand contact to Zn(2+). Q247 is a binding site for 4-imidazolone-5-propanoate. Fe(3+) is bound at residue D319. D319 is a Zn(2+) binding site. Residues N321 and G323 each contribute to the N-formimidoyl-L-glutamate site. Position 324 (T324) interacts with 4-imidazolone-5-propanoate.

This sequence belongs to the metallo-dependent hydrolases superfamily. HutI family. Zn(2+) serves as cofactor. Requires Fe(3+) as cofactor.

It localises to the cytoplasm. The enzyme catalyses 4-imidazolone-5-propanoate + H2O = N-formimidoyl-L-glutamate. The protein operates within amino-acid degradation; L-histidine degradation into L-glutamate; N-formimidoyl-L-glutamate from L-histidine: step 3/3. In terms of biological role, catalyzes the hydrolytic cleavage of the carbon-nitrogen bond in imidazolone-5-propanoate to yield N-formimidoyl-L-glutamate. It is the third step in the universal histidine degradation pathway. The polypeptide is Imidazolonepropionase (Salmonella paratyphi C (strain RKS4594)).